Reading from the N-terminus, the 197-residue chain is Transmembrane 4 L6 family member 5 (197 aa).

Topologically, residues 1–9 (MCTGKCARC) are cytoplasmic. Residues 10 to 30 (VGLSLITLCLVCIVANALLLV) form a helical membrane-spanning segment. Over 31–46 (PNGETSWTNTNHLSLQ) the chain is Extracellular. The chain crosses the membrane as a helical span at residues 47–67 (VWLMGGFIGGGLMVLCPGIAA). Topologically, residues 68-90 (VRAGGKGCCGAGCCGNRCRMLRS) are cytoplasmic. Residues 91–111 (VFSSAFGVLGAIYCLSVSGAG) form a helical membrane-spanning segment. The interval 91 to 197 (VFSSAFGVLG…DCRKKQDTPH (107 aa)) is interaction with MTOR and CASTOR1. The Extracellular portion of the chain corresponds to 112–157 (LRNGPRCLMNGEWGYHFEDTAGAYLLNRTLWDRCEAPPRVVPWNVT). 124–129 (WGYHFE) lines the L-arginine pocket. N-linked (GlcNAc...) asparagine glycosylation is found at Asn138 and Asn155. Residues 158–178 (LFSLLVAASCLEIVLCGIQLV) form a helical membrane-spanning segment. Over 179–197 (NATIGVFCGDCRKKQDTPH) the chain is Cytoplasmic.

Belongs to the L6 tetraspanin family. Interacts with MTOR; the interaction is positively regulated by arginine and is negatively regulated by leucine. Interacts with SLC38A9. Interacts with SLC7A1; the interaction is negatively regulated by arginine. Interacts with CASTOR1; the interaction is positively regulated by leucine and is negatively regulated by arginine. As to expression, intestine. Overexpressed in pancreatic cancers.

Its subcellular location is the lysosome membrane. The protein resides in the cell membrane. Functionally, acts as a lysosomal membrane arginine sensor. Forms a complex with MTOR and SLC38A9 on lysosomal membranes in an arginine-regulated manner, leading to arginine efflux which enables the activation of mTORC1 which subsequently leads to RPS6KB1 and EIF4EBP1 phosphorylations. Facilitates cell cycle G1/S phase progression and the translocation of the CDK4-CCND1 complex into the nucleus. CDKN1B and RHOA/ROCK signaling activity are involved in TM4SF5-mediated acceleration of G1/S phase progression. The polypeptide is Transmembrane 4 L6 family member 5 (TM4SF5) (Homo sapiens (Human)).